An 859-amino-acid chain; its full sequence is DNA mismatch repair protein MutS (859 aa).

ATP is bound at residue 622 to 629; the sequence is GPNMGGKS.

Belongs to the DNA mismatch repair MutS family.

In terms of biological role, this protein is involved in the repair of mismatches in DNA. It is possible that it carries out the mismatch recognition step. This protein has a weak ATPase activity. This chain is DNA mismatch repair protein MutS, found in Coxiella burnetii (strain Dugway 5J108-111).